We begin with the raw amino-acid sequence, 443 residues long: Tubulin beta chain (443 aa).

GTP is bound by residues Q11, E69, S138, G142, T143, G144, N204, and N226. E69 contributes to the Mg(2+) binding site. Residues 421 to 443 are disordered; it reads EYQQYQDASAEEEGEFGEEEEEN. A compositionally biased stretch (acidic residues) spans 429 to 443; that stretch reads SAEEEGEFGEEEEEN.

The protein belongs to the tubulin family. Dimer of alpha and beta chains. A typical microtubule is a hollow water-filled tube with an outer diameter of 25 nm and an inner diameter of 15 nM. Alpha-beta heterodimers associate head-to-tail to form protofilaments running lengthwise along the microtubule wall with the beta-tubulin subunit facing the microtubule plus end conferring a structural polarity. Microtubules usually have 13 protofilaments but different protofilament numbers can be found in some organisms and specialized cells. Mg(2+) serves as cofactor.

Its subcellular location is the cytoplasm. The protein resides in the cytoskeleton. In terms of biological role, tubulin is the major constituent of microtubules, a cylinder consisting of laterally associated linear protofilaments composed of alpha- and beta-tubulin heterodimers. Microtubules grow by the addition of GTP-tubulin dimers to the microtubule end, where a stabilizing cap forms. Below the cap, tubulin dimers are in GDP-bound state, owing to GTPase activity of alpha-tubulin. The protein is Tubulin beta chain (TUBB1) of Polytomella agilis (Quadriflagellate alga).